Consider the following 45-residue polypeptide: Putative purine permease 9 (45 aa).

As to expression, not detected in seedlings, leaves, embryos or root and shoot meristems.

This chain is Putative purine permease 9, found in Arabidopsis thaliana (Mouse-ear cress).